Consider the following 314-residue polypeptide: Probable cell division protein WhiA (314 aa).

Residues 274 to 308 (SLKELGEMVSTGTISKSGVNHRLRKLNELADKIRS) constitute a DNA-binding region (H-T-H motif).

Belongs to the WhiA family.

Functionally, involved in cell division and chromosome segregation. This Staphylococcus carnosus (strain TM300) protein is Probable cell division protein WhiA.